Here is a 476-residue protein sequence, read N- to C-terminus: Amidophosphoribosyltransferase (476 aa).

The propeptide occupies 1-11 (MLAEIKGLNEE). Cys12 (nucleophile) is an active-site residue. The region spanning 12–231 (CGVFGIWGHE…PGEMLIINDE (220 aa)) is the Glutamine amidotransferase type-2 domain. Cys247 serves as a coordination point for [4Fe-4S] cluster. Positions 294, 356, and 357 each coordinate Mg(2+). [4Fe-4S] cluster contacts are provided by Cys393, Cys448, and Cys451.

The protein in the C-terminal section; belongs to the purine/pyrimidine phosphoribosyltransferase family. Homotetramer. Mg(2+) serves as cofactor. It depends on [4Fe-4S] cluster as a cofactor.

It catalyses the reaction 5-phospho-beta-D-ribosylamine + L-glutamate + diphosphate = 5-phospho-alpha-D-ribose 1-diphosphate + L-glutamine + H2O. The protein operates within purine metabolism; IMP biosynthesis via de novo pathway; N(1)-(5-phospho-D-ribosyl)glycinamide from 5-phospho-alpha-D-ribose 1-diphosphate: step 1/2. With respect to regulation, allosterically regulated; subject to end product regulation by purine nucleotides. Its function is as follows. Catalyzes the formation of phosphoribosylamine from phosphoribosylpyrophosphate (PRPP) and glutamine. This is Amidophosphoribosyltransferase from Bacillus subtilis (strain 168).